Consider the following 201-residue polypeptide: 3-isopropylmalate dehydratase small subunit (201 aa).

It belongs to the LeuD family. LeuD type 1 subfamily. As to quaternary structure, heterodimer of LeuC and LeuD.

The enzyme catalyses (2R,3S)-3-isopropylmalate = (2S)-2-isopropylmalate. It participates in amino-acid biosynthesis; L-leucine biosynthesis; L-leucine from 3-methyl-2-oxobutanoate: step 2/4. Catalyzes the isomerization between 2-isopropylmalate and 3-isopropylmalate, via the formation of 2-isopropylmaleate. This chain is 3-isopropylmalate dehydratase small subunit, found in Paracoccus denitrificans (strain Pd 1222).